The primary structure comprises 161 residues: uncharacterized protein (161 aa).

This is an uncharacterized protein from Mycobacterium tuberculosis (strain CDC 1551 / Oshkosh).